The sequence spans 300 residues: GTPase Era (300 aa).

Positions 8–176 (RCGYVAIVGR…EAQIAKHLPE (169 aa)) constitute an Era-type G domain. Positions 16 to 23 (GRPNVGKS) are G1. 16–23 (GRPNVGKS) lines the GTP pocket. A G2 region spans residues 42–46 (QTTRH). Residues 63–66 (DTPG) are G3. GTP is bound by residues 63–67 (DTPGM) and 125–128 (NKTD). The G4 stretch occupies residues 125–128 (NKTD). Positions 155-157 (ISA) are G5. The KH type-2 domain maps to 199-283 (VREKIMRQLG…MLNLWVKVKG (85 aa)).

Belongs to the TRAFAC class TrmE-Era-EngA-EngB-Septin-like GTPase superfamily. Era GTPase family. As to quaternary structure, monomer.

It localises to the cytoplasm. It is found in the cell inner membrane. An essential GTPase that binds both GDP and GTP, with rapid nucleotide exchange. Plays a role in 16S rRNA processing and 30S ribosomal subunit biogenesis and possibly also in cell cycle regulation and energy metabolism. This is GTPase Era from Pseudomonas entomophila (strain L48).